The following is a 78-amino-acid chain: Small ribosomal subunit protein bS20 (78 aa).

Belongs to the bacterial ribosomal protein bS20 family.

Binds directly to 16S ribosomal RNA. The polypeptide is Small ribosomal subunit protein bS20 (Streptococcus pneumoniae serotype 4 (strain ATCC BAA-334 / TIGR4)).